Reading from the N-terminus, the 287-residue chain is Elongation factor Ts (287 aa).

Positions 80-83 are involved in Mg(2+) ion dislocation from EF-Tu; it reads TDFL.

This sequence belongs to the EF-Ts family.

It is found in the cytoplasm. Functionally, associates with the EF-Tu.GDP complex and induces the exchange of GDP to GTP. It remains bound to the aminoacyl-tRNA.EF-Tu.GTP complex up to the GTP hydrolysis stage on the ribosome. This Pseudomonas putida (strain ATCC 700007 / DSM 6899 / JCM 31910 / BCRC 17059 / LMG 24140 / F1) protein is Elongation factor Ts.